Here is a 590-residue protein sequence, read N- to C-terminus: Putative DEAD-box ATP-dependent RNA helicase 51 (590 aa).

Positions 1 to 81 (MHPIKLCARS…KQGEGKKGSG (81 aa)) are disordered. Residues 40–51 (AACNSEGENNAT) show a composition bias toward polar residues. Positions 59 to 78 (NKKMKEEKSKRKKKQGEGKK) are enriched in basic and acidic residues. The Q motif motif lies at 86–114 (KLFSDLPISDLTANAIRDMNYTHLTEIQA). Positions 117 to 293 (IPPLMLGSDV…KLTFGSKEER (177 aa)) constitute a Helicase ATP-binding domain. 130-137 (AKTGSGKT) contributes to the ATP binding site. The DEAD box signature appears at 240 to 243 (DEAD). One can recognise a Helicase C-terminal domain in the interval 329-481 (VLYAFLKKAL…ELVPKLQPYL (153 aa)). The segment at 549–590 (LESSASKHRKKRNVNTGRRHGIGPSNPYGRKGSDDRRQFARF) is disordered. A compositionally biased stretch (basic residues) spans 554 to 569 (SKHRKKRNVNTGRRHG). The segment covering 579-590 (KGSDDRRQFARF) has biased composition (basic and acidic residues).

The protein belongs to the DEAD box helicase family. DDX18/HAS1 subfamily.

It carries out the reaction ATP + H2O = ADP + phosphate + H(+). The chain is Putative DEAD-box ATP-dependent RNA helicase 51 from Oryza sativa subsp. japonica (Rice).